Consider the following 154-residue polypeptide: Transcriptional repressor NrdR (154 aa).

Residues 3-34 fold into a zinc finger; it reads CPFCRHPDSRVVDSRETDEGQAIRRRRSCPEC. The region spanning 46–136 is the ATP-cone domain; that stretch reads LAVVKRSGVT…VYRSFSSAED (91 aa).

Belongs to the NrdR family. Zn(2+) serves as cofactor.

Negatively regulates transcription of bacterial ribonucleotide reductase nrd genes and operons by binding to NrdR-boxes. In Mycolicibacterium vanbaalenii (strain DSM 7251 / JCM 13017 / BCRC 16820 / KCTC 9966 / NRRL B-24157 / PYR-1) (Mycobacterium vanbaalenii), this protein is Transcriptional repressor NrdR.